The sequence spans 220 residues: Cytidylate kinase (220 aa).

10 to 18 (GPASSGKST) lines the ATP pocket.

The protein belongs to the cytidylate kinase family. Type 1 subfamily.

It localises to the cytoplasm. It catalyses the reaction CMP + ATP = CDP + ADP. The enzyme catalyses dCMP + ATP = dCDP + ADP. This chain is Cytidylate kinase, found in Lactococcus lactis subsp. cremoris (strain SK11).